The following is a 320-amino-acid chain: Bifunctional phosphoglucose/phosphomannose isomerase (320 aa).

Residues Ile-20–Leu-153 form the SIS domain. D-fructose 6-phosphate-binding residues include Gly-37, Ser-38, Ser-80, Ser-82, Thr-85, and Arg-132. The active-site Proton acceptor is Glu-204. Positions 220 and 313 each coordinate D-fructose 6-phosphate. The active-site Proton donor is the His-220. Catalysis depends on Lys-313, which acts as the Proton acceptor.

The protein belongs to the PGI/PMI family. Homodimer.

The catalysed reaction is alpha-D-glucose 6-phosphate = beta-D-fructose 6-phosphate. The enzyme catalyses D-mannose 6-phosphate = D-fructose 6-phosphate. Dual specificity isomerase that catalyzes the isomerization of both glucose-6-phosphate and mannose-6-phosphate to fructose-6-phosphate. This chain is Bifunctional phosphoglucose/phosphomannose isomerase, found in Aquifex aeolicus (strain VF5).